Here is a 135-residue protein sequence, read N- to C-terminus: uncharacterized protein (135 aa).

The region spanning 2-71 (TYTTAKAAEK…LKDIKRFAEC (70 aa)) is the HTH merR-type domain. The H-T-H motif DNA-binding region spans 5–24 (TAKAAEKIGISAYTLRFYDK).

This is an uncharacterized protein from Haemophilus influenzae (strain ATCC 51907 / DSM 11121 / KW20 / Rd).